We begin with the raw amino-acid sequence, 382 residues long: 2-carboxy-1,4-naphthoquinone phytyltransferase, chloroplastic (382 aa).

Residues 1–66 (MVNFVSLCDI…RRNLRVRPIF (66 aa)) constitute a chloroplast transit peptide. 8 consecutive transmembrane segments (helical) span residues 99 to 119 (VALVPLTVGASAAYLETGLFL), 123 to 143 (YVTLLLSSILIITWLNLSNDV), 168 to 188 (TLAAAITSLALGVSGLVWTSL), 196 to 216 (ILLLASAILCGYVYQCPPFRL), 224 to 244 (PLCFAAFGPFATTAFYLLLGS), 257 to 277 (VLSSSVLVGFTTSLILFCSHF), 323 to 343 (ILPLPCTLMCFLTLPVGNLVS), and 361 to 381 (YYCVRLHALLGAALSLGLVIA).

The protein belongs to the MenA family. Type 2 subfamily.

The protein localises to the plastid. It is found in the chloroplast membrane. It catalyses the reaction 2-carboxy-1,4-naphthoquinone + phytyl diphosphate + H(+) = demethylphylloquinone + CO2 + diphosphate. Its function is as follows. Involved in the synthesis of phylloquinone (vitamin K1). Catalyzes the transfer of a prenyl chain to 2-carboxy-1,4-naphthoquinone. This Arabidopsis thaliana (Mouse-ear cress) protein is 2-carboxy-1,4-naphthoquinone phytyltransferase, chloroplastic (ABC4).